The chain runs to 114 residues: Small ribosomal subunit protein bS6 (114 aa).

This sequence belongs to the bacterial ribosomal protein bS6 family.

Binds together with bS18 to 16S ribosomal RNA. In Protochlamydia amoebophila (strain UWE25), this protein is Small ribosomal subunit protein bS6.